The sequence spans 256 residues: tRNA-cytidine(32) 2-sulfurtransferase (256 aa).

Residues 35-40 carry the PP-loop motif motif; sequence SGGKDS. [4Fe-4S] cluster contacts are provided by Cys110, Cys113, and Cys201.

It belongs to the TtcA family. Homodimer. Mg(2+) is required as a cofactor. The cofactor is [4Fe-4S] cluster.

Its subcellular location is the cytoplasm. It carries out the reaction cytidine(32) in tRNA + S-sulfanyl-L-cysteinyl-[cysteine desulfurase] + AH2 + ATP = 2-thiocytidine(32) in tRNA + L-cysteinyl-[cysteine desulfurase] + A + AMP + diphosphate + H(+). It functions in the pathway tRNA modification. In terms of biological role, catalyzes the ATP-dependent 2-thiolation of cytidine in position 32 of tRNA, to form 2-thiocytidine (s(2)C32). The sulfur atoms are provided by the cysteine/cysteine desulfurase (IscS) system. In Coxiella burnetii (strain RSA 493 / Nine Mile phase I), this protein is tRNA-cytidine(32) 2-sulfurtransferase.